We begin with the raw amino-acid sequence, 472 residues long: Glycine--tRNA ligase (472 aa).

Substrate-binding residues include arginine 109 and glutamate 174. ATP is bound by residues 206–208 (RNE), 216–221 (FRTREF), 293–294 (EL), and 337–340 (GLTR). 221-225 (FEQME) contributes to the substrate binding site. Substrate is bound at residue 333-337 (EPAAG).

This sequence belongs to the class-II aminoacyl-tRNA synthetase family. As to quaternary structure, homodimer.

The protein resides in the cytoplasm. The catalysed reaction is tRNA(Gly) + glycine + ATP = glycyl-tRNA(Gly) + AMP + diphosphate. Its function is as follows. Catalyzes the attachment of glycine to tRNA(Gly). The chain is Glycine--tRNA ligase from Cutibacterium acnes (strain DSM 16379 / KPA171202) (Propionibacterium acnes).